Consider the following 741-residue polypeptide: NAD(P)H-quinone oxidoreductase subunit 5, chloroplastic (741 aa).

Helical transmembrane passes span 9–29 (WVIPLLPLPVILSMGFGLFLI), 39–59 (IWAFPSVLLLSIAMVFSVQLS), 89–109 (IDPLTSIMLMLITTVGILVLI), 125–145 (FIYISFFNISMLGLVTSSNLI), 147–167 (IYFFWELVGMCSYLLIGFWFT), 184–204 (IGDFGLLLGILGFFWITGSLE), 216–238 (IPNNGTTSLLTTLCAFLLFLGAV), 258–278 (TPISALIHAATMVAAGIFLLA), 280–300 (LLPLFISLPLIMTFISLVGTI), 327–347 (LGYMMLALGIGSYQAALFHLI), 354–374 (ALLFLGSGSIIHSMEPLVGYS), 396–416 (TAFLWGTLSICGIPPLACFWS), 425–445 (WLYSPFFGIIASFTAGLTAFY), 544–564 (LFPLLILLLFTFFIGFIGIPF), 612–632 (SLVILGLFIAYIFYGSAYSFF), and 721–741 (ISSYLFFFLCYVSVFLFFFLS).

Belongs to the complex I subunit 5 family. In terms of assembly, NDH is composed of at least 16 different subunits, 5 of which are encoded in the nucleus.

It localises to the plastid. Its subcellular location is the chloroplast thylakoid membrane. The catalysed reaction is a plastoquinone + NADH + (n+1) H(+)(in) = a plastoquinol + NAD(+) + n H(+)(out). It catalyses the reaction a plastoquinone + NADPH + (n+1) H(+)(in) = a plastoquinol + NADP(+) + n H(+)(out). Functionally, NDH shuttles electrons from NAD(P)H:plastoquinone, via FMN and iron-sulfur (Fe-S) centers, to quinones in the photosynthetic chain and possibly in a chloroplast respiratory chain. The immediate electron acceptor for the enzyme in this species is believed to be plastoquinone. Couples the redox reaction to proton translocation, and thus conserves the redox energy in a proton gradient. This chain is NAD(P)H-quinone oxidoreductase subunit 5, chloroplastic (ndhF), found in Brachypodium distachyon (Purple false brome).